Here is a 302-residue protein sequence, read N- to C-terminus: Deoxyribonuclease-1-like 1 (302 aa).

A signal peptide spans 1–18; it reads MHYPTALLFLILANGAQA. Active-site residues include Glu97 and His148. A disulfide bridge links Cys187 with Cys224. A glycan (N-linked (GlcNAc...) asparagine) is linked at Asn261.

Belongs to the DNase I family. Highest levels in skeletal and cardiac muscles. Detectable in all other tissues tested except brain.

It localises to the endoplasmic reticulum. This chain is Deoxyribonuclease-1-like 1 (DNASE1L1), found in Homo sapiens (Human).